Consider the following 335-residue polypeptide: Nucleoid-associated protein YejK (335 aa).

It belongs to the YejK family.

Its subcellular location is the cytoplasm. It is found in the nucleoid. In Shigella sonnei (strain Ss046), this protein is Nucleoid-associated protein YejK.